Reading from the N-terminus, the 132-residue chain is CDGSH iron-sulfur domain-containing protein 2 homolog (132 aa).

Residues 1–35 are Lumenal-facing; the sequence is MEPISHLVKSSLPNYLSSLPVPDSLGGWFKLSFKD. A helical membrane pass occupies residues 36 to 58; it reads WLALIPPTAVLAGLGYTAYLAFC. The Cytoplasmic portion of the chain corresponds to 59 to 132; sequence PAAQCSAKSA…VGPVVVSKKK (74 aa). Residues Cys-97, Cys-99, Cys-108, and His-112 each coordinate [2Fe-2S] cluster.

Belongs to the CISD protein family. CISD2 subfamily. It depends on [2Fe-2S] cluster as a cofactor.

It localises to the endoplasmic reticulum membrane. In Drosophila grimshawi (Hawaiian fruit fly), this protein is CDGSH iron-sulfur domain-containing protein 2 homolog.